The chain runs to 432 residues: 3-phosphoshikimate 1-carboxyvinyltransferase (432 aa).

Residues lysine 23, serine 24, and arginine 28 each coordinate 3-phosphoshikimate. Lysine 23 contacts phosphoenolpyruvate. 2 residues coordinate phosphoenolpyruvate: glycine 95 and arginine 123. 4 residues coordinate 3-phosphoshikimate: serine 167, glutamine 169, aspartate 317, and lysine 344. Glutamine 169 contacts phosphoenolpyruvate. Residue aspartate 317 is the Proton acceptor of the active site. Arginine 348 and arginine 390 together coordinate phosphoenolpyruvate.

Belongs to the EPSP synthase family. In terms of assembly, monomer.

The protein resides in the cytoplasm. It carries out the reaction 3-phosphoshikimate + phosphoenolpyruvate = 5-O-(1-carboxyvinyl)-3-phosphoshikimate + phosphate. Its pathway is metabolic intermediate biosynthesis; chorismate biosynthesis; chorismate from D-erythrose 4-phosphate and phosphoenolpyruvate: step 6/7. Catalyzes the transfer of the enolpyruvyl moiety of phosphoenolpyruvate (PEP) to the 5-hydroxyl of shikimate-3-phosphate (S3P) to produce enolpyruvyl shikimate-3-phosphate and inorganic phosphate. This is 3-phosphoshikimate 1-carboxyvinyltransferase from Staphylococcus aureus (strain bovine RF122 / ET3-1).